Reading from the N-terminus, the 708-residue chain is tRNA(Met) cytidine acetyltransferase TmcA (708 aa).

Residues glutamine 189, 215–224 (GRGKTSALGL), and arginine 357 each bind ATP. Positions 398-574 (PECVEQPERL…YSLLMVRGEH (177 aa)) constitute an N-acetyltransferase domain. Acetyl-CoA contacts are provided by residues 502 to 504 (IAV) and 509 to 515 (QRQGIGS).

Belongs to the RNA cytidine acetyltransferase family. TmcA subfamily.

The protein localises to the cytoplasm. The enzyme catalyses cytidine(34) in elongator tRNA(Met) + acetyl-CoA + ATP + H2O = N(4)-acetylcytidine(34) in elongator tRNA(Met) + ADP + phosphate + CoA + H(+). Catalyzes the formation of N(4)-acetylcytidine (ac(4)C) at the wobble position of tRNA(Met), by using acetyl-CoA as an acetyl donor and ATP (or GTP). The chain is tRNA(Met) cytidine acetyltransferase TmcA from Vibrio cholerae serotype O1 (strain ATCC 39315 / El Tor Inaba N16961).